The chain runs to 967 residues: MAKGFYISKSLGILGILLGVAAVCTIIALSVVYSQEKNKNANSSPVASTTPSASATTNPASATTLDQSKAWNRYRLPNTLKPDSYRVTLRPYLTPNDRGLYVFKGSSTVRFTCKEATDVIIIHSKKLNYTLSQGHRVVLRGVGGSQPPDIDKTELVEPTEYLVVHLKGSLVKDSQYEMDSEFEGELADDLAGFYRSEYMEGNVRKVVATTQMQAADARKSFPCFDEPAMKAEFNITLIHPKDLTALSNMLPKGPSTPLPEDPNWNVTEFHTTPKMSTYLLAFIVSEFDYVEKQASNGVLIRIWARPSAIAAGHGDYALNVTGPILNFFAGHYDTPYPLPKSDQIGLPDFNAGAMENWGLVTYRENSLLFDPLSSSSSNKERVVTVIAHELAHQWFGNLVTIEWWNDLWLNEGFASYVEYLGADYAEPTWNLKDLMVLNDVYRVMAVDALASSHPLSTPASEINTPAQISELFDAISYSKGASVLRMLSSFLSEDVFKQGLASYLHTFAYQNTIYLNLWDHLQEAVNNRSIQLPTTVRDIMNRWTLQMGFPVITVDTSTGTLSQEHFLLDPDSNVTRPSEFNYVWIVPITSIRDGRQQQDYWLIDVRAQNDLFSTSGNEWVLLNLNVTGYYRVNYDEENWRKIQTQLQRDHSAIPVINRAQIINDAFNLASAHKVPVTLALNNTLFLIEERQYMPWEAALSSLSYFKLMFDRSEVYGPMKNYLKKQVTPLFIHFRNNTNNWREIPENLMDQYSEVNAISTACSNGVPECEEMVSGLFKQWMENPNNNPIHPNLRSTVYCNAIAQGGEEEWDFAWEQFRNATLVNEADKLRAALACSKELWILNRYLSYTLNPDLIRKQDATSTIISITNNVIGQGLVWDFVQSNWKKLFNDYGGGSFSFSNLIQAVTRRFSTEYELQQLEQFKKDNEETGFGSGTRALEQALEKTKANIKWVKENKEVVLQWFTENSK.

At 2–8 (AKGFYIS) the chain is on the cytoplasmic side. A helical; Signal-anchor for type II membrane protein transmembrane segment spans residues 9–32 (KSLGILGILLGVAAVCTIIALSVV). Positions 33–68 (YSQEKNKNANSSPVASTTPSASATTNPASATTLDQS) are cytosolic Ser/Thr-rich junction. At 33-967 (YSQEKNKNAN…VLQWFTENSK (935 aa)) the chain is on the extracellular side. The segment at 40-62 (NANSSPVASTTPSASATTNPASA) is disordered. The span at 41 to 62 (ANSSPVASTTPSASATTNPASA) shows a compositional bias: low complexity. Residues 69–967 (KAWNRYRLPN…VLQWFTENSK (899 aa)) are metalloprotease. N-linked (GlcNAc...) asparagine glycosylation occurs at Asn128. Tyr176 carries the sulfotyrosine modification. N-linked (GlcNAc...) asparagine glycosylation is found at Asn234 and Asn265. The segment at 288–295 (DYVEKQAS) is necessary and sufficient to mediate interaction with HCoV-229E. Asn319 carries an N-linked (GlcNAc...) asparagine glycan. Residue 352 to 356 (GAMEN) coordinates substrate. His388 is a binding site for Zn(2+). Glu389 functions as the Proton acceptor in the catalytic mechanism. His392 and Glu411 together coordinate Zn(2+). Residues Tyr419 and Tyr424 each carry the sulfotyrosine modification. Asn527, Asn573, Asn625, Asn681, and Asn735 each carry an N-linked (GlcNAc...) asparagine glycan. 2 disulfide bridges follow: Cys761–Cys768 and Cys798–Cys834. N-linked (GlcNAc...) asparagine glycosylation is present at Asn818. A Sulfotyrosine modification is found at Tyr913.

Belongs to the peptidase M1 family. In terms of assembly, homodimer. Interacts with SLC6A19. As to quaternary structure, (Microbial infection) Interacts with the S1 domain of human coronavirus 229E/HCoV-229E spike protein. Zn(2+) serves as cofactor. Post-translationally, sulfated. N- and O-glycosylated. In terms of processing, may undergo proteolysis and give rise to a soluble form. As to expression, expressed in epithelial cells of the kidney, intestine, and respiratory tract; granulocytes, monocytes, fibroblasts, endothelial cells, cerebral pericytes at the blood-brain barrier, synaptic membranes of cells in the CNS. Also expressed in endometrial stromal cells, but not in the endometrial glandular cells. Found in the vasculature of tissues that undergo angiogenesis and in malignant gliomas and lymph node metastases from multiple tumor types but not in blood vessels of normal tissues. A soluble form has been found in plasma. It is found to be elevated in plasma and effusions of cancer patients.

Its subcellular location is the cell membrane. It catalyses the reaction Release of an N-terminal amino acid, Xaa-|-Yaa- from a peptide, amide or arylamide. Xaa is preferably Ala, but may be most amino acids including Pro (slow action). When a terminal hydrophobic residue is followed by a prolyl residue, the two may be released as an intact Xaa-Pro dipeptide.. Functionally, broad specificity aminopeptidase which plays a role in the final digestion of peptides generated from hydrolysis of proteins by gastric and pancreatic proteases. Also involved in the processing of various peptides including peptide hormones, such as angiotensin III and IV, neuropeptides, and chemokines. May also be involved the cleavage of peptides bound to major histocompatibility complex class II molecules of antigen presenting cells. May have a role in angiogenesis and promote cholesterol crystallization. May have a role in amino acid transport by acting as binding partner of amino acid transporter SLC6A19 and regulating its activity. (Microbial infection) Acts as a receptor for human coronavirus 229E/HCoV-229E. In case of human coronavirus 229E (HCoV-229E) infection, serves as receptor for HCoV-229E spike glycoprotein. In terms of biological role, (Microbial infection) Mediates as well Human cytomegalovirus (HCMV) infection. The protein is Aminopeptidase N (ANPEP) of Homo sapiens (Human).